The following is a 370-amino-acid chain: Histidinol-phosphate aminotransferase (370 aa).

Lys-220 bears the N6-(pyridoxal phosphate)lysine mark.

Belongs to the class-II pyridoxal-phosphate-dependent aminotransferase family. Histidinol-phosphate aminotransferase subfamily. In terms of assembly, homodimer. It depends on pyridoxal 5'-phosphate as a cofactor.

The catalysed reaction is L-histidinol phosphate + 2-oxoglutarate = 3-(imidazol-4-yl)-2-oxopropyl phosphate + L-glutamate. Its pathway is amino-acid biosynthesis; L-histidine biosynthesis; L-histidine from 5-phospho-alpha-D-ribose 1-diphosphate: step 7/9. The chain is Histidinol-phosphate aminotransferase from Granulibacter bethesdensis (strain ATCC BAA-1260 / CGDNIH1).